A 226-amino-acid polypeptide reads, in one-letter code: Biosynthetic peptidoglycan transglycosylase (226 aa).

Residues 5 to 25 traverse the membrane as a helical segment; that stretch reads IGVTVLAVVGLLLLPYLLTPL.

The protein belongs to the glycosyltransferase 51 family.

It is found in the cell inner membrane. The enzyme catalyses [GlcNAc-(1-&gt;4)-Mur2Ac(oyl-L-Ala-gamma-D-Glu-L-Lys-D-Ala-D-Ala)](n)-di-trans,octa-cis-undecaprenyl diphosphate + beta-D-GlcNAc-(1-&gt;4)-Mur2Ac(oyl-L-Ala-gamma-D-Glu-L-Lys-D-Ala-D-Ala)-di-trans,octa-cis-undecaprenyl diphosphate = [GlcNAc-(1-&gt;4)-Mur2Ac(oyl-L-Ala-gamma-D-Glu-L-Lys-D-Ala-D-Ala)](n+1)-di-trans,octa-cis-undecaprenyl diphosphate + di-trans,octa-cis-undecaprenyl diphosphate + H(+). Its pathway is cell wall biogenesis; peptidoglycan biosynthesis. Peptidoglycan polymerase that catalyzes glycan chain elongation from lipid-linked precursors. This is Biosynthetic peptidoglycan transglycosylase from Nitrobacter hamburgensis (strain DSM 10229 / NCIMB 13809 / X14).